The primary structure comprises 243 residues: VVGGKPAKLGAWPWMVALGFHNYRQPKKSPEWKCGGSLRISRHVLTAAHCAIHRSLYVVRIADLNLKRDDDGAHPIQMGIESKLIHPDYVYSEHHDDIAILKLEKDVSFSEYIRPICLPIEESLRNNNFIGYNPFVAGWGRLRYKGPLSDALMEVQVPVVRNKVCKRAYSDVSDTVICAGYPKGRKDSCQGDSGGPLMIPQESTYYEIGVVSYGHECALPKYPGVYTRVTSYLDSFILPALKK.

The 243-residue stretch at 1–243 (VVGGKPAKLG…DSFILPALKK (243 aa)) folds into the Peptidase S1 domain. Residues C34 and C50 are joined by a disulfide bond. Active-site charge relay system residues include H49 and D97. 2 cysteine pairs are disulfide-bonded: C165–C178 and C189–C217. Catalysis depends on S193, which acts as the Charge relay system.

Belongs to the peptidase S1 family. Expressed by the venom duct.

Its subcellular location is the secreted. This is Venom protease from Bombus pensylvanicus (American bumblebee).